Here is a 422-residue protein sequence, read N- to C-terminus: ORC1-type DNA replication protein 13 (422 aa).

Residues 80–84 (TGKTL), Tyr-231, and Arg-243 each bind ATP.

It belongs to the CDC6/cdc18 family.

Involved in regulation of DNA replication. The protein is ORC1-type DNA replication protein 13 (cdc6m) of Haloarcula marismortui (strain ATCC 43049 / DSM 3752 / JCM 8966 / VKM B-1809) (Halobacterium marismortui).